An 814-amino-acid polypeptide reads, in one-letter code: G-type lectin S-receptor-like serine/threonine-protein kinase At1g61400 (814 aa).

The N-terminal stretch at 1 to 34 (MDFLFLLLERKNKHMGKKRVVLLWLSIFISFSSA) is a signal peptide. Positions 35–154 (EITEESPLSI…VSGRTLWESF (120 aa)) constitute a Bulb-type lectin domain. The Extracellular segment spans residues 35 to 436 (EITEESPLSI…ELDVNKRKKT (402 aa)). Residues N63, N104, N127, and N246 are each glycosylated (N-linked (GlcNAc...) asparagine). In terms of domain architecture, EGF-like; atypical spans 288-324 (PANSCDIYGVCGPFGFCVISVPPKCKCFKGFIPKSIE). Cystine bridges form between C292–C304 and C298–C312. N-linked (GlcNAc...) asparagine glycans are attached at residues N330, N346, and N385. Residues 343–425 (CQGNSTGKDA…GELLSIRLAR (83 aa)) enclose the PAN domain. 2 disulfide bridges follow: C378–C399 and C382–C388. Residues 437–457 (IIAITVSLTLFVILGFTAFGF) traverse the membrane as a helical segment. Topologically, residues 458 to 814 (WRRRVEQNAL…EMTESVIHGR (357 aa)) are cytoplasmic. The 286-residue stretch at 500-785 (FSLSNKLGHG…DLPLPKQPTF (286 aa)) folds into the Protein kinase domain. ATP is bound by residues 506-514 (LGHGGFGSV) and K528. Phosphoserine occurs at positions 534 and 549. A caM-binding region spans residues 589-606 (KKRLEIDWPKRFDIIQGI). D625 acts as the Proton acceptor in catalysis. A phosphoserine mark is found at S629 and S642. T659 is modified (phosphothreonine). 2 positions are modified to phosphoserine: S702 and S796.

The protein belongs to the protein kinase superfamily. Ser/Thr protein kinase family.

It localises to the cell membrane. It catalyses the reaction L-seryl-[protein] + ATP = O-phospho-L-seryl-[protein] + ADP + H(+). The enzyme catalyses L-threonyl-[protein] + ATP = O-phospho-L-threonyl-[protein] + ADP + H(+). This is G-type lectin S-receptor-like serine/threonine-protein kinase At1g61400 from Arabidopsis thaliana (Mouse-ear cress).